A 278-amino-acid chain; its full sequence is Indole-3-glycerol phosphate synthase (278 aa).

This sequence belongs to the TrpC family.

The enzyme catalyses 1-(2-carboxyphenylamino)-1-deoxy-D-ribulose 5-phosphate + H(+) = (1S,2R)-1-C-(indol-3-yl)glycerol 3-phosphate + CO2 + H2O. Its pathway is amino-acid biosynthesis; L-tryptophan biosynthesis; L-tryptophan from chorismate: step 4/5. This chain is Indole-3-glycerol phosphate synthase, found in Stutzerimonas stutzeri (strain A1501) (Pseudomonas stutzeri).